Reading from the N-terminus, the 126-residue chain is Protein chibby homolog 1 (126 aa).

A compositionally biased stretch (polar residues) spans 1–10; it reads MPFFGNTFSP. The interval 1-26 is disordered; the sequence is MPFFGNTFSPKKTPPRKSASLSNLHS. 2 positions are modified to phosphoserine: serine 9 and serine 20. The minimal region for the interaction with PKD2 stretch occupies residues 60–112; it reads IAETGVSGGVDRREVQRLRRRNQQLEEENNLLRLKVDILLDMLSESTAESHLM. Residues 67–125 adopt a coiled-coil conformation; it reads GGVDRREVQRLRRRNQQLEEENNLLRLKVDILLDMLSESTAESHLMEKELDELRISRKR. Residues 77 to 98 are leucine-zipper; mediates homodimerization; that stretch reads LRRRNQQLEEENNLLRLKVDIL.

It belongs to the chibby family. Homodimer. Homodimerization is essential for nuclear localization and interaction with KPNA4 but is dispensable for interaction with CTNNB1. Interacts with polycystin-2/PKD2 and GM130. Interacts with the C-terminal region of CTNNB1. Interacts (C-terminus) with TCIM (C-terminus), TCIM competes with CTNNB1 for the interaction with CBY1. Interacts with FAM92A; this interaction facilitates targeting of FAM92A to cilium basal body. Interacts with CIBAR2. Interacts with KPNA4. As to expression, widely expressed. Expressed at higher levels in heart, skeletal muscle, kidney and placenta. Also found in brain, lung, liver and testis. Significantly down-regulated in thyroid and metastatic uterine tumors.

It localises to the nucleus speckle. It is found in the cytoplasm. The protein localises to the cytoskeleton. The protein resides in the cilium basal body. Its subcellular location is the microtubule organizing center. It localises to the centrosome. It is found in the centriole. The protein localises to the golgi apparatus. The protein resides in the trans-Golgi network. Its subcellular location is the cell projection. It localises to the cilium. It is found in the flagellum. The protein localises to the nucleus. Inhibits the Wnt/Wingless pathway by binding to CTNNB1/beta-catenin and inhibiting beta-catenin-mediated transcriptional activation through competition with TCF/LEF transcription factors. Has also been shown to play a role in regulating the intracellular trafficking of polycystin-2/PKD2 and possibly of other intracellular proteins. Promotes adipocyte and cardiomyocyte differentiation. The chain is Protein chibby homolog 1 (CBY1) from Homo sapiens (Human).